The primary structure comprises 240 residues: 4-hydroxy-tetrahydrodipicolinate reductase (240 aa).

NAD(+)-binding positions include 79–81 and 103–106; these read ATT and SANM. The Proton donor/acceptor role is filled by H135. H136 serves as a coordination point for (S)-2,3,4,5-tetrahydrodipicolinate. Catalysis depends on K139, which acts as the Proton donor. 145–146 contacts (S)-2,3,4,5-tetrahydrodipicolinate; sequence GT.

Belongs to the DapB family.

It is found in the cytoplasm. It catalyses the reaction (S)-2,3,4,5-tetrahydrodipicolinate + NAD(+) + H2O = (2S,4S)-4-hydroxy-2,3,4,5-tetrahydrodipicolinate + NADH + H(+). The enzyme catalyses (S)-2,3,4,5-tetrahydrodipicolinate + NADP(+) + H2O = (2S,4S)-4-hydroxy-2,3,4,5-tetrahydrodipicolinate + NADPH + H(+). The protein operates within amino-acid biosynthesis; L-lysine biosynthesis via DAP pathway; (S)-tetrahydrodipicolinate from L-aspartate: step 4/4. Its function is as follows. Catalyzes the conversion of 4-hydroxy-tetrahydrodipicolinate (HTPA) to tetrahydrodipicolinate. This is 4-hydroxy-tetrahydrodipicolinate reductase from Staphylococcus aureus (strain JH1).